A 63-amino-acid polypeptide reads, in one-letter code: Large ribosomal subunit protein eL29 (63 aa).

Positions 1–26 (MAKSKNHTAHNQTRKAHRNGIKKPKT) are enriched in basic residues. A disordered region spans residues 1 to 35 (MAKSKNHTAHNQTRKAHRNGIKKPKTYKYPSLKGV).

This sequence belongs to the eukaryotic ribosomal protein eL29 family. In terms of assembly, component of the large ribosomal subunit. Mature ribosomes consist of a small (40S) and a large (60S) subunit. The 40S subunit contains about 32 different proteins and 1 molecule of RNA (18S). The 60S subunit contains 45 different proteins and 3 molecules of RNA (25S, 5.8S and 5S).

The protein localises to the cytoplasm. Functionally, component of the ribosome, a large ribonucleoprotein complex responsible for the synthesis of proteins in the cell. The small ribosomal subunit (SSU) binds messenger RNAs (mRNAs) and translates the encoded message by selecting cognate aminoacyl-transfer RNA (tRNA) molecules. The large subunit (LSU) contains the ribosomal catalytic site termed the peptidyl transferase center (PTC), which catalyzes the formation of peptide bonds, thereby polymerizing the amino acids delivered by tRNAs into a polypeptide chain. The nascent polypeptides leave the ribosome through a tunnel in the LSU and interact with protein factors that function in enzymatic processing, targeting, and the membrane insertion of nascent chains at the exit of the ribosomal tunnel. This is Large ribosomal subunit protein eL29 from Candida albicans (strain SC5314 / ATCC MYA-2876) (Yeast).